The following is a 396-amino-acid chain: Ribosomal RNA large subunit methyltransferase I (396 aa).

The PUA domain maps to 2-79; the sequence is AVRIKLKPGR…REEEIDREFF (78 aa).

This sequence belongs to the methyltransferase superfamily. RlmI family.

The protein resides in the cytoplasm. It carries out the reaction cytidine(1962) in 23S rRNA + S-adenosyl-L-methionine = 5-methylcytidine(1962) in 23S rRNA + S-adenosyl-L-homocysteine + H(+). Functionally, specifically methylates the cytosine at position 1962 (m5C1962) of 23S rRNA. This Shewanella sp. (strain MR-7) protein is Ribosomal RNA large subunit methyltransferase I.